The primary structure comprises 263 residues: 4-hydroxy-tetrahydrodipicolinate reductase (263 aa).

NAD(+)-binding positions include 7-12 (GFKGRM), 96-98 (GTT), and 122-125 (APNF). His152 functions as the Proton donor/acceptor in the catalytic mechanism. His153 is a binding site for (S)-2,3,4,5-tetrahydrodipicolinate. Lys156 functions as the Proton donor in the catalytic mechanism. A (S)-2,3,4,5-tetrahydrodipicolinate-binding site is contributed by 162 to 163 (GT).

The protein belongs to the DapB family.

The protein resides in the cytoplasm. The catalysed reaction is (S)-2,3,4,5-tetrahydrodipicolinate + NAD(+) + H2O = (2S,4S)-4-hydroxy-2,3,4,5-tetrahydrodipicolinate + NADH + H(+). It carries out the reaction (S)-2,3,4,5-tetrahydrodipicolinate + NADP(+) + H2O = (2S,4S)-4-hydroxy-2,3,4,5-tetrahydrodipicolinate + NADPH + H(+). It functions in the pathway amino-acid biosynthesis; L-lysine biosynthesis via DAP pathway; (S)-tetrahydrodipicolinate from L-aspartate: step 4/4. Its function is as follows. Catalyzes the conversion of 4-hydroxy-tetrahydrodipicolinate (HTPA) to tetrahydrodipicolinate. This chain is 4-hydroxy-tetrahydrodipicolinate reductase, found in Listeria monocytogenes serovar 1/2a (strain ATCC BAA-679 / EGD-e).